The sequence spans 140 residues: Sex-regulated protein janus-B (140 aa).

Position 42 (Arg-42) interacts with substrate. The active-site Proton acceptor is His-69. 110–112 (SRT) provides a ligand contact to substrate.

Belongs to the janus family.

Functionally, janA and janB regulate somatic sex differentiation. The chain is Sex-regulated protein janus-B (janB) from Drosophila sechellia (Fruit fly).